Here is a 129-residue protein sequence, read N- to C-terminus: Small ribosomal subunit protein uS13m (129 aa).

The segment at 92 to 129 is disordered; the sequence is HQDGSPLRGQRTHTNARTARKQIRKGNERRLPKEQATD. Residues 116 to 129 show a composition bias toward basic and acidic residues; that stretch reads KGNERRLPKEQATD.

The protein belongs to the universal ribosomal protein uS13 family. Part of the small ribosomal subunit.

Its subcellular location is the mitochondrion. Its function is as follows. Located at the top of the head of the small subunit, it contacts several helices of the 18S rRNA. This Zea mays (Maize) protein is Small ribosomal subunit protein uS13m (RPS13).